We begin with the raw amino-acid sequence, 349 residues long: Phenylalanine--tRNA ligase alpha subunit (349 aa).

Glutamate 259 serves as a coordination point for Mg(2+).

This sequence belongs to the class-II aminoacyl-tRNA synthetase family. Phe-tRNA synthetase alpha subunit type 1 subfamily. In terms of assembly, tetramer of two alpha and two beta subunits. Mg(2+) is required as a cofactor.

It is found in the cytoplasm. The enzyme catalyses tRNA(Phe) + L-phenylalanine + ATP = L-phenylalanyl-tRNA(Phe) + AMP + diphosphate + H(+). The chain is Phenylalanine--tRNA ligase alpha subunit from Lactobacillus helveticus (strain DPC 4571).